The primary structure comprises 552 residues: Putative transport protein HAPS_0158 (552 aa).

The next 5 membrane-spanning stretches (helical) occupy residues 4-24 (IALT…IGHI), 28-48 (GVSL…HFMT), 65-85 (FGLI…FFAS), 95-115 (AFAV…HKIF), and 157-177 (MGYA…MWLI). RCK C-terminal domains lie at 193–275 (DSAT…ILGE) and 277–360 (VNVS…IIGN). Transmembrane regions (helical) follow at residues 370-390 (MLPI…PIYL), 393-413 (FPVA…LILA), 438-458 (IVLF…NTLL), 463-483 (LAWI…TGLV), 492-512 (YLSL…LAFA), and 532-552 (LVMF…WVAG).

Belongs to the AAE transporter (TC 2.A.81) family. YidE subfamily.

Its subcellular location is the cell membrane. In Glaesserella parasuis serovar 5 (strain SH0165) (Haemophilus parasuis), this protein is Putative transport protein HAPS_0158.